The chain runs to 374 residues: ORC1-type DNA replication protein 6 (374 aa).

ATP contacts are provided by residues 66–70, tyrosine 209, and arginine 221; that span reads TGKTT.

It belongs to the CDC6/cdc18 family.

Its function is as follows. Involved in regulation of DNA replication. The chain is ORC1-type DNA replication protein 6 (orc6) from Halobacterium salinarum (strain ATCC 700922 / JCM 11081 / NRC-1) (Halobacterium halobium).